We begin with the raw amino-acid sequence, 582 residues long: Methionine--tRNA ligase (582 aa).

Positions 24 to 34 (PYIYAVPHLGN) match the 'HIGH' region motif. Zn(2+) contacts are provided by Cys156, Cys159, Cys169, and Cys172. The 'KMSKS' region signature appears at 346–350 (KFSKS). Lys349 contacts ATP.

Belongs to the class-I aminoacyl-tRNA synthetase family. MetG type 1 subfamily. Zn(2+) is required as a cofactor.

It localises to the cytoplasm. The catalysed reaction is tRNA(Met) + L-methionine + ATP = L-methionyl-tRNA(Met) + AMP + diphosphate. Is required not only for elongation of protein synthesis but also for the initiation of all mRNA translation through initiator tRNA(fMet) aminoacylation. The polypeptide is Methionine--tRNA ligase (Caldivirga maquilingensis (strain ATCC 700844 / DSM 13496 / JCM 10307 / IC-167)).